The chain runs to 619 residues: Chaperone protein HscA homolog (619 aa).

This sequence belongs to the heat shock protein 70 family.

In terms of biological role, chaperone involved in the maturation of iron-sulfur cluster-containing proteins. Has a low intrinsic ATPase activity which is markedly stimulated by HscB. In Shewanella amazonensis (strain ATCC BAA-1098 / SB2B), this protein is Chaperone protein HscA homolog.